We begin with the raw amino-acid sequence, 909 residues long: UPF0182 protein H16_A1615 (909 aa).

The next 7 membrane-spanning stretches (helical) occupy residues 16–36 (TWVV…GLVV), 58–78 (ALLF…SGWL), 114–134 (VAVL…AIAL), 169–189 (WLLL…GLRG), 205–225 (ATHG…SYWL), 246–266 (VHVG…AAAA), and 281–301 (AAAL…PALF).

The protein belongs to the UPF0182 family.

It is found in the cell membrane. The sequence is that of UPF0182 protein H16_A1615 from Cupriavidus necator (strain ATCC 17699 / DSM 428 / KCTC 22496 / NCIMB 10442 / H16 / Stanier 337) (Ralstonia eutropha).